A 171-amino-acid polypeptide reads, in one-letter code: ATP synthase subunit b (171 aa).

Residues 2 to 22 (FLVKMVLGFLILLSPLCATGL) form a helical membrane-spanning segment.

This sequence belongs to the ATPase B chain family. As to quaternary structure, F-type ATPases have 2 components, F(1) - the catalytic core - and F(0) - the membrane proton channel. F(1) has five subunits: alpha(3), beta(3), gamma(1), delta(1), epsilon(1). F(0) has three main subunits: a(1), b(2) and c(10-14). The alpha and beta chains form an alternating ring which encloses part of the gamma chain. F(1) is attached to F(0) by a central stalk formed by the gamma and epsilon chains, while a peripheral stalk is formed by the delta and b chains.

Its subcellular location is the cell inner membrane. Its function is as follows. F(1)F(0) ATP synthase produces ATP from ADP in the presence of a proton or sodium gradient. F-type ATPases consist of two structural domains, F(1) containing the extramembraneous catalytic core and F(0) containing the membrane proton channel, linked together by a central stalk and a peripheral stalk. During catalysis, ATP synthesis in the catalytic domain of F(1) is coupled via a rotary mechanism of the central stalk subunits to proton translocation. Component of the F(0) channel, it forms part of the peripheral stalk, linking F(1) to F(0). The chain is ATP synthase subunit b from Helicobacter pylori (strain HPAG1).